A 152-amino-acid polypeptide reads, in one-letter code: Large ribosomal subunit protein bL9 (152 aa).

It belongs to the bacterial ribosomal protein bL9 family.

Functionally, binds to the 23S rRNA. The chain is Large ribosomal subunit protein bL9 from Mycobacterium leprae (strain Br4923).